The primary structure comprises 354 residues: Uptake hydrogenase small subunit (354 aa).

The segment at residues 1–44 (MSQLETXYDVMRRQGITRRSFLKYCSLTGRPCLGPTFAPQIAHA) is a signal peptide (tat-type signal). Residues cysteine 61, cysteine 64, cysteine 156, cysteine 190, histidine 228, serine 231, cysteine 256, and cysteine 262 each coordinate [4Fe-4S] cluster. Residues cysteine 271, cysteine 290, and cysteine 293 each coordinate [3Fe-4S] cluster.

This sequence belongs to the [NiFe]/[NiFeSe] hydrogenase small subunit family. As to quaternary structure, heterodimer of a large and a small subunit. [4Fe-4S] cluster serves as cofactor. Requires [3Fe-4S] cluster as cofactor. Post-translationally, predicted to be exported by the Tat system. The position of the signal peptide cleavage has not been experimentally proven.

The protein localises to the cell membrane. It carries out the reaction H2 + A = AH2. In terms of biological role, this enzyme recycles the H(2) produced by nitrogenase to increase the production of ATP and to protect nitrogenase against inhibition or damage by O(2) under carbon- or phosphate-limited conditions. The chain is Uptake hydrogenase small subunit (hupA) from Azotobacter chroococcum mcd 1.